The chain runs to 548 residues: Formyltransferase/hydrolase complex Fhc subunit A (548 aa).

The Zn(2+) site is built by His-57, His-59, and His-227.

It belongs to the metallo-dependent hydrolases superfamily. FwdA/FmdA family. In terms of assembly, octaheteromer. Part of the formyltransferase/hydrolase complex fhc; composed of FhcA, FhcB, FhcC and FhcD. It depends on Zn(2+) as a cofactor.

Its subcellular location is the cytoplasm. It carries out the reaction N-formylmethanofuran + H2O = methanofuran + formate. It functions in the pathway one-carbon metabolism; formaldehyde degradation; formate from formaldehyde (H(4)MPT route): step 4/5. Functionally, involved in the transformation of 5-formyl tetrahydromethanopterin (5-formyl-H(4)MPT) to methanofuran (MFR) and formate via the formylmethanofuran (formyl-MFR). May be catalyze the hydrolysis of formylmethanofuran (formyl-MFR) to yield formate and MFR. In Methylorubrum extorquens (strain ATCC 14718 / DSM 1338 / JCM 2805 / NCIMB 9133 / AM1) (Methylobacterium extorquens), this protein is Formyltransferase/hydrolase complex Fhc subunit A (fhcA).